A 983-amino-acid chain; its full sequence is 3',5'-cyclic-AMP phosphodiesterase, isoforms N/G (983 aa).

Disordered regions lie at residues 31–333 (MPEG…SAGL), 349–370 (SDSD…ASES), 400–429 (VPAS…LSQG), and 528–566 (SAGQ…RLPT). The span at 35–50 (GEDHRGDLNQKGENNN) shows a compositional bias: basic and acidic residues. Positions 51–60 (RPRPSISLAN) are enriched in polar residues. Residues 84 to 97 (SVGGGDSDGGGEAI) show a composition bias toward gly residues. Composition is skewed to low complexity over residues 112–121 (LSTTTSNSSS) and 145–167 (QLQQ…SQRS). Residues 174-199 (AEGEEFDVDPMDEDDEDQTYDRETEE) show a composition bias toward acidic residues. 2 stretches are compositionally biased toward low complexity: residues 219 to 234 (SSLF…TTSS) and 248 to 261 (AASI…SDLM). 3 stretches are compositionally biased toward polar residues: residues 268–287 (STAT…SQRR), 358–368 (KSMSRNSSIAS), and 401–419 (PASN…SRSG). Positions 569–898 (VETPRENELG…DYYQSMIPPS (330 aa)) constitute a PDEase domain. His645 (proton donor) is an active-site residue. Position 645 to 649 (645 to 649 (HNSLH)) interacts with 3',5'-cyclic AMP. Residues His649, His685, Asp686, and Asp803 each contribute to the a divalent metal cation site. Residues Asp686, Asp803, and Gln854 each contribute to the 3',5'-cyclic AMP site. Positions 920–937 (EESDQENLAELEEGDESG) are enriched in acidic residues. Residues 920–983 (EESDQENLAE…CQNQPQHGGM (64 aa)) are disordered. Residues 938–955 (GESTTTGTTGTTAASALS) are compositionally biased toward low complexity. Residues 956-967 (GAGGGGGGGGGM) are compositionally biased toward gly residues. Over residues 973-983 (GCQNQPQHGGM) the composition is skewed to polar residues.

The protein belongs to the cyclic nucleotide phosphodiesterase family. PDE4 subfamily. As to quaternary structure, monomer. The cofactor is a divalent metal cation.

The enzyme catalyses 3',5'-cyclic AMP + H2O = AMP + H(+). Its pathway is purine metabolism; 3',5'-cyclic AMP degradation; AMP from 3',5'-cyclic AMP: step 1/1. In terms of biological role, hydrolyzes the second messenger cAMP, which is a key regulator of many important physiological processes. Vital for female fertility. Required for learning/memory. The chain is 3',5'-cyclic-AMP phosphodiesterase, isoforms N/G from Drosophila melanogaster (Fruit fly).